A 246-amino-acid polypeptide reads, in one-letter code: Lipoprotein-releasing system ATP-binding protein LolD 1 (246 aa).

The ABC transporter domain maps to 6-244; it reads LKLERIRKDL…ASVTNEAASL (239 aa). Position 43–50 (43–50) interacts with ATP; the sequence is GPSGSGKS.

Belongs to the ABC transporter superfamily. Lipoprotein translocase (TC 3.A.1.125) family. In terms of assembly, the complex is composed of two ATP-binding proteins (LolD) and two transmembrane proteins (LolC and LolE).

The protein localises to the cell inner membrane. Functionally, part of the ABC transporter complex LolCDE involved in the translocation of mature outer membrane-directed lipoproteins, from the inner membrane to the periplasmic chaperone, LolA. Responsible for the formation of the LolA-lipoprotein complex in an ATP-dependent manner. The polypeptide is Lipoprotein-releasing system ATP-binding protein LolD 1 (Chlorobium chlorochromatii (strain CaD3)).